Reading from the N-terminus, the 270-residue chain is Putative pyruvate, phosphate dikinase regulatory protein 2 (270 aa).

Gly151 to Thr158 lines the ADP pocket.

Belongs to the pyruvate, phosphate/water dikinase regulatory protein family. PDRP subfamily.

The catalysed reaction is N(tele)-phospho-L-histidyl/L-threonyl-[pyruvate, phosphate dikinase] + ADP = N(tele)-phospho-L-histidyl/O-phospho-L-threonyl-[pyruvate, phosphate dikinase] + AMP + H(+). It carries out the reaction N(tele)-phospho-L-histidyl/O-phospho-L-threonyl-[pyruvate, phosphate dikinase] + phosphate + H(+) = N(tele)-phospho-L-histidyl/L-threonyl-[pyruvate, phosphate dikinase] + diphosphate. In terms of biological role, bifunctional serine/threonine kinase and phosphorylase involved in the regulation of the pyruvate, phosphate dikinase (PPDK) by catalyzing its phosphorylation/dephosphorylation. The protein is Putative pyruvate, phosphate dikinase regulatory protein 2 of Listeria monocytogenes serotype 4b (strain F2365).